We begin with the raw amino-acid sequence, 336 residues long: Probable allantoicase (336 aa).

It belongs to the allantoicase family.

The catalysed reaction is allantoate + H2O = (S)-ureidoglycolate + urea. It functions in the pathway nitrogen metabolism; (S)-allantoin degradation; (S)-ureidoglycolate from allantoate (aminidohydrolase route): step 1/1. This Acinetobacter baumannii (strain ATCC 17978 / DSM 105126 / CIP 53.77 / LMG 1025 / NCDC KC755 / 5377) protein is Probable allantoicase.